A 230-amino-acid polypeptide reads, in one-letter code: uncharacterized protein (230 aa).

Polar residues predominate over residues 1 to 11 (MPVPSVTVTTD). Positions 1-88 (MPVPSVTVTT…TLKRPTSNSI (88 aa)) are disordered. Residues 63–73 (DDQHRHSDVHS) show a composition bias toward basic and acidic residues. Positions 79 to 88 (TLKRPTSNSI) are enriched in polar residues. S106 carries the phosphoserine modification. Basic and acidic residues predominate over residues 156-179 (LKREDSRVSSTKKEHINDHTDMHS). The interval 156-203 (LKREDSRVSSTKKEHINDHTDMHSTRSKVTTNSQGSSLEPNKLNMAVE) is disordered. The span at 182–194 (SKVTTNSQGSSLE) shows a compositional bias: polar residues.

This is an uncharacterized protein from Saccharomyces cerevisiae (strain ATCC 204508 / S288c) (Baker's yeast).